A 693-amino-acid chain; its full sequence is Golgin subfamily A member 6C (693 aa).

Disordered regions lie at residues 20-71 (NKLA…DSQY), 497-547 (LPGE…GTEQ), and 629-693 (NPAD…MQDT). Residues 73–611 (ELAVALESSS…KLLELQELVL (539 aa)) adopt a coiled-coil conformation. Basic and acidic residues predominate over residues 537-547 (LPKEKADGTEQ). The segment covering 679–693 (PVQQIVQLSPVMQDT) has biased composition (polar residues).

It belongs to the GOLGA6 family.

In Homo sapiens (Human), this protein is Golgin subfamily A member 6C (GOLGA6C).